A 255-amino-acid chain; its full sequence is ParA family protein CT_582 (255 aa).

The protein belongs to the ParA family.

The sequence is that of ParA family protein CT_582 from Chlamydia trachomatis serovar D (strain ATCC VR-885 / DSM 19411 / UW-3/Cx).